Reading from the N-terminus, the 264-residue chain is Thymidylate synthase (264 aa).

Arg-21 contributes to the dUMP binding site. Residue His-51 coordinates (6R)-5,10-methylene-5,6,7,8-tetrahydrofolate. 126 to 127 (RR) contacts dUMP. The active-site Nucleophile is Cys-146. DUMP-binding positions include 166 to 169 (RSAD), Asn-177, and 207 to 209 (HLY). Residue Asp-169 participates in (6R)-5,10-methylene-5,6,7,8-tetrahydrofolate binding. A (6R)-5,10-methylene-5,6,7,8-tetrahydrofolate-binding site is contributed by Ala-263.

This sequence belongs to the thymidylate synthase family. Bacterial-type ThyA subfamily. In terms of assembly, homodimer.

It localises to the cytoplasm. The catalysed reaction is dUMP + (6R)-5,10-methylene-5,6,7,8-tetrahydrofolate = 7,8-dihydrofolate + dTMP. It participates in pyrimidine metabolism; dTTP biosynthesis. Catalyzes the reductive methylation of 2'-deoxyuridine-5'-monophosphate (dUMP) to 2'-deoxythymidine-5'-monophosphate (dTMP) while utilizing 5,10-methylenetetrahydrofolate (mTHF) as the methyl donor and reductant in the reaction, yielding dihydrofolate (DHF) as a by-product. This enzymatic reaction provides an intracellular de novo source of dTMP, an essential precursor for DNA biosynthesis. The sequence is that of Thymidylate synthase from Azoarcus sp. (strain BH72).